The chain runs to 248 residues: ATP synthase subunit a (248 aa).

The next 6 membrane-spanning stretches (helical) occupy residues 27-47, 83-103, 113-133, 142-162, 192-212, and 215-235; these read FTNS…LMLV, FFPL…IGIV, LIVT…YGFS, LFVP…IEVI, FVAM…LPLG, and IALT…FAIL.

The protein belongs to the ATPase A chain family. As to quaternary structure, F-type ATPases have 2 components, CF(1) - the catalytic core - and CF(0) - the membrane proton channel. CF(1) has five subunits: alpha(3), beta(3), gamma(1), delta(1), epsilon(1). CF(0) has four main subunits: a, b, b' and c.

It is found in the cell inner membrane. Its function is as follows. Key component of the proton channel; it plays a direct role in the translocation of protons across the membrane. This is ATP synthase subunit a from Rhodopseudomonas palustris (strain ATCC BAA-98 / CGA009).